Reading from the N-terminus, the 221-residue chain is Eukaryotic translation initiation factor 4E-2 (221 aa).

Basic and acidic residues predominate over residues 1–20 (MADELNKAALEEYKSSSVED). The interval 1–36 (MADELNKAALEEYKSSSVEDRGEEGEIVGESDDTAS) is disordered. Over residues 21-33 (RGEEGEIVGESDD) the composition is skewed to acidic residues. EIF4G-binding regions lie at residues 46 to 49 (HPLE) and 56 to 92 (FDNPSGKSKQAAWGSSIRPIYTFSTAEDFWSVYNNIH). Residues 64 to 69 (KQAAWG), K96, and 114 to 115 (WE) contribute to the mRNA site. Residues C119 and C157 are joined by a disulfide bond. Positions 140–149 (YTLLALIGEQ) are EIF4G-binding. Residues 164-169 (RVRQEK) and 209-213 (KKLDR) each bind mRNA.

The protein belongs to the eukaryotic initiation factor 4E family. In terms of assembly, EIF4F is a multi-subunit complex, the composition of which varies with external and internal environmental conditions. It is composed of at least EIF4A, EIF4E and EIF4G. EIF4E is also known to interact with other partners. In higher plants two isoforms of EIF4F have been identified, named isoform EIF4F and isoform EIF(iso)4F. Isoform EIF4F has subunits p220 and p26, whereas isoform EIF(iso)4F has subunits p82 and p28. (Microbial infection) Interacts with potyvirus viral genome-linked protein (VPg) in the nucleus; mostly potato virus Y (PVY-LYE84) and tobacco etch virus (TEV-HAT) VPg, but not with PVY-LYE90 and pepper mottle virus (PepMoV) VPg; these interactions are possible in susceptible hosts but impaired in resistant plants. In terms of processing, according to the redox status, the Cys-119-Cys-157 disulfide bridge may have a role in regulating protein function by affecting its ability to bind capped mRNA.

The protein localises to the nucleus. The protein resides in the cytoplasm. In terms of biological role, component of the protein complex eIF4F, which is involved in the recognition of the mRNA cap, ATP-dependent unwinding of 5'-terminal secondary structure and recruitment of mRNA to the ribosome. Recognizes and binds the 7-methylguanosine-containing mRNA cap during an early step in the initiation of protein synthesis and facilitates ribosome binding by inducing the unwinding of the mRNAs secondary structures. Key component of recessive resistance to potyviruses. Functionally, (Microbial infection) Susceptibility host factor required for viral infection (e.g. potato virus Y (PVY) and tobacco etch virus (TEV)) by recruiting viral RNAs to the host ribosomal complex via an interaction with viral genome-linked protein (VPg). This is Eukaryotic translation initiation factor 4E-2 from Solanum lycopersicum (Tomato).